Here is a 484-residue protein sequence, read N- to C-terminus: Aspartyl/glutamyl-tRNA(Asn/Gln) amidotransferase subunit B (484 aa).

Belongs to the GatB/GatE family. GatB subfamily. As to quaternary structure, heterotrimer of A, B and C subunits.

The enzyme catalyses L-glutamyl-tRNA(Gln) + L-glutamine + ATP + H2O = L-glutaminyl-tRNA(Gln) + L-glutamate + ADP + phosphate + H(+). The catalysed reaction is L-aspartyl-tRNA(Asn) + L-glutamine + ATP + H2O = L-asparaginyl-tRNA(Asn) + L-glutamate + ADP + phosphate + 2 H(+). Functionally, allows the formation of correctly charged Asn-tRNA(Asn) or Gln-tRNA(Gln) through the transamidation of misacylated Asp-tRNA(Asn) or Glu-tRNA(Gln) in organisms which lack either or both of asparaginyl-tRNA or glutaminyl-tRNA synthetases. The reaction takes place in the presence of glutamine and ATP through an activated phospho-Asp-tRNA(Asn) or phospho-Glu-tRNA(Gln). The chain is Aspartyl/glutamyl-tRNA(Asn/Gln) amidotransferase subunit B from Cupriavidus metallidurans (strain ATCC 43123 / DSM 2839 / NBRC 102507 / CH34) (Ralstonia metallidurans).